A 133-amino-acid polypeptide reads, in one-letter code: Putative N-acetylgalactosamine permease IIC component 2 (133 aa).

At 1–2 the chain is on the cytoplasmic side; that stretch reads ME. The PTS EIIC type-4 domain maps to 1-133; that stretch reads MEISLLQAFA…CDLATNPRRI (133 aa). Residues 3–23 form a helical membrane-spanning segment; that stretch reads ISLLQAFALGIIAFIAGLDMF. The Periplasmic segment spans residues 24-32; sequence NGLTHMHRP. The chain crosses the membrane as a helical span at residues 33–53; it reads VVLGPLVGLVLGDLHTGILTG. Residues 54-65 lie on the Cytoplasmic side of the membrane; sequence GTLELVWMGLAP. The chain crosses the membrane as a helical span at residues 66-86; the sequence is LAGAQPPNVIIGTIVGTAFAI. At 87-93 the chain is on the periplasmic side; it reads TTGVKPD. The helical transmembrane segment at 94 to 114 threads the bilayer; sequence VAVGVAVPFAVAVQMGITFLF. Topologically, residues 115-133 are cytoplasmic; that stretch reads SVMSGVMSRCDLATNPRRI.

The protein localises to the cell inner membrane. The phosphoenolpyruvate-dependent sugar phosphotransferase system (PTS), a major carbohydrate active -transport system, catalyzes the phosphorylation of incoming sugar substrates concomitant with their translocation across the cell membrane. This system is involved in N-acetylgalactosamine transport. In Escherichia coli (strain K12), this protein is Putative N-acetylgalactosamine permease IIC component 2 (agaW).